A 570-amino-acid polypeptide reads, in one-letter code: Repressible high-affinity phosphate permease (570 aa).

Residues 1 to 61 (MSTPQKTAGG…AVAGVGFFTD (61 aa)) lie on the Cytoplasmic side of the membrane. A helical transmembrane segment spans residues 62 to 82 (SYDIFTVSLLTLMLGIVYFPG). Residues 83-95 (EGKMPTTSDTAIK) lie on the Extracellular side of the membrane. Residues 96–116 (LATSAGTVIGQVGFGAAADVF) form a helical membrane-spanning segment. Residues 117 to 120 (GRKS) are Cytoplasmic-facing. A helical membrane pass occupies residues 121-141 (MYGLELLFIIFATLAQALASG). Residues 142-143 (SP) lie on the Extracellular side of the membrane. Residues 144–164 (SINIIGIIIFWRVLMGVGIGG) traverse the membrane as a helical segment. Over 165-186 (DYPLSSIITSEFATTKWRGAMM) the chain is Cytoplasmic. Residues 187–207 (GAVFAMQGLGQLAAAFVMLFV) form a helical membrane-spanning segment. Residues 208 to 237 (TLGFKKSLEAAPTLASCTGDCAVAVDKMWR) lie on the Extracellular side of the membrane. The chain crosses the membrane as a helical span at residues 238 to 258 (TVIGVGAVPGCIALYYRLTIP). Residues 259 to 325 (ETPRYTFDVK…FFRHYSKRKN (67 aa)) are Cytoplasmic-facing. A helical membrane pass occupies residues 326-346 (AMLLAGTALSWCFLDIAYYGV). Residues 347–374 (SLNNATILNVIGYSTTGAKNTYEILYNT) lie on the Extracellular side of the membrane. The helical transmembrane segment at 375–395 (AVGNLIIVLAGAVPGYWVTVF) threads the bilayer. Over 396 to 403 (TVDTVGRK) the chain is Cytoplasmic. The chain crosses the membrane as a helical span at residues 404-424 (PIQFMGFGILTILFVVMGFAY). Topologically, residues 425–433 (KHLSPHALL) are extracellular. Residues 434–454 (AIFVLAQFFFNFGPNATTFIV) form a helical membrane-spanning segment. Residues 455–468 (PGEVFPTRYRSTSH) lie on the Cytoplasmic side of the membrane. The chain crosses the membrane as a helical span at residues 469–489 (GLSAAMGKIGSIIGQGAIAPL). The Extracellular portion of the chain corresponds to 490-505 (RTRGAVKGGNPNPWMN). The chain crosses the membrane as a helical span at residues 506–526 (HVLEIYALFMLLGVGTTFLIP). At 527 to 570 (ETKRKTLEELSGEFDMSGEEEAQRDTTLTEHKTEAPTSSAAVNA) the chain is on the cytoplasmic side. Acidic residues predominate over residues 537 to 546 (SGEFDMSGEE). The disordered stretch occupies residues 537–570 (SGEFDMSGEEEAQRDTTLTEHKTEAPTSSAAVNA). Residues 547 to 560 (EAQRDTTLTEHKTE) show a composition bias toward basic and acidic residues. Positions 561 to 570 (APTSSAAVNA) are enriched in polar residues.

It belongs to the major facilitator superfamily. Sugar transporter (TC 2.A.1.1) family.

The protein localises to the cell membrane. Phosphate transport activity is competitively inhibited by arsenate. Functionally, high-affinity transporter for external inorganic phosphate. Acts probably as a H(+)-phosphate symporter. The polypeptide is Repressible high-affinity phosphate permease (Neurospora crassa (strain ATCC 24698 / 74-OR23-1A / CBS 708.71 / DSM 1257 / FGSC 987)).